The sequence spans 280 residues: Protein lyl-1 (280 aa).

Residues 1–60 (MCPPQAQAEVGPTMTEKAEMVCAPSPAPAPPPKPASPGPPQVEEVGHRGGSSPPRLPPGV) form a disordered region. The span at 25–40 (SPAPAPPPKPASPGPP) shows a compositional bias: pro residues. Residues 150-202 (ARRVFTNSRERWRQQNVNGAFAELRKLLPTHPPDRKLSKNEVLRLAMKYIGFL) form the bHLH domain. The tract at residues 214 to 280 (AAGPTPPGPR…EQTALSPEVR (67 aa)) is disordered. The span at 229 to 245 (RVPDDGARRGSGRRAEA) shows a compositional bias: basic and acidic residues. Positions 257–267 (PDGSPGGAARP) are enriched in low complexity. Phosphoserine is present on residues S260 and S276.

Efficient DNA binding requires dimerization with another bHLH protein.

It is found in the nucleus. This Homo sapiens (Human) protein is Protein lyl-1 (LYL1).